Reading from the N-terminus, the 412-residue chain is NTEFAELKIRDKIFKLPILKASIGQDVIDISKVYSEADCFTYDPGFMSTASCRSTITYIDGDQGILRHRGYDIKDLAEKSDFLEVAYLLIYGELPNNKQYNDFTKKVAHHALVNERLHYLFQTFCSSSHPMAIMLAAVGSLSAFYPDLLNFFKEADYELTAIRMIAKIPTIAAMSYKYSIGQPFVYPDNSLDFTENFLHMMFATPCEKYKVNPVIKNALNKIFILHADHEQNASTSTVRIAGSSGANPFACVSTGIASLWGPAHGGANEAVINMLKEIGSVENIPKYIAKAKDKNDNFRLMGFGHRVYKNYDPRAAVLKETCKEVLKELGQLDNNPLLQIAIELEAIALKDEYFIERKLYPNVDFYSGIIYKAMGIPPQMFTVLFATARTVGWMAQWKEMHEDPEQKISRPR.

Active-site residues include H305 and D364.

It belongs to the citrate synthase family.

It carries out the reaction oxaloacetate + acetyl-CoA + H2O = citrate + CoA + H(+). The protein operates within carbohydrate metabolism; tricarboxylic acid cycle; isocitrate from oxaloacetate: step 1/2. This chain is Citrate synthase (gltA), found in Rickettsia bellii.